Reading from the N-terminus, the 203-residue chain is Large ribosomal subunit protein bL25 (203 aa).

This sequence belongs to the bacterial ribosomal protein bL25 family. CTC subfamily. In terms of assembly, part of the 50S ribosomal subunit; part of the 5S rRNA/L5/L18/L25 subcomplex. Contacts the 5S rRNA. Binds to the 5S rRNA independently of L5 and L18.

Its function is as follows. This is one of the proteins that binds to the 5S RNA in the ribosome where it forms part of the central protuberance. The protein is Large ribosomal subunit protein bL25 of Cupriavidus metallidurans (strain ATCC 43123 / DSM 2839 / NBRC 102507 / CH34) (Ralstonia metallidurans).